The following is a 146-amino-acid chain: Aspartate 1-decarboxylase (146 aa).

The active-site Schiff-base intermediate with substrate; via pyruvic acid is the S25. The residue at position 25 (S25) is a Pyruvic acid (Ser). T57 serves as a coordination point for substrate. The active-site Proton donor is Y58. A substrate-binding site is contributed by 73–75 (GPA).

Belongs to the PanD family. Heterooctamer of four alpha and four beta subunits. The cofactor is pyruvate. Post-translationally, is synthesized initially as an inactive proenzyme, which is activated by self-cleavage at a specific serine bond to produce a beta-subunit with a hydroxyl group at its C-terminus and an alpha-subunit with a pyruvoyl group at its N-terminus.

The protein localises to the cytoplasm. It carries out the reaction L-aspartate + H(+) = beta-alanine + CO2. Its pathway is cofactor biosynthesis; (R)-pantothenate biosynthesis; beta-alanine from L-aspartate: step 1/1. Its function is as follows. Catalyzes the pyruvoyl-dependent decarboxylation of aspartate to produce beta-alanine. The protein is Aspartate 1-decarboxylase of Salinibacter ruber (strain DSM 13855 / M31).